The sequence spans 489 residues: MILFTRLLAVSLLLVSGAFAKFQEFDDSDDVAEYDDNDFAEFEDAADEAPTLRPPSQQVPEKEDEIEDDDEEEEEATVELEGQEEFEEDTEGQEGDADAEPYDDEEFENYDDRLDTGTPNKNNDPITIVDVPAHLQNSWESYYMEILMVTGLLAYIMNYIIGKNKNSRLAQAWFNSHRELLESNFSLVGDDGMNKDAVSTGMLNQENDHIYNMWCSGRLCCEGMLIQLKFIKRQDLLNVLSRMMRPVCDQVQIKVTMNDEDMDTYVFSVGTRKTLIRLQKEMQDLSEFCGDKPKSAAKMGLPESMAVLAEMGEVTDGIMDTKMVHYLTNYSDKIESIHFSDQFSGPKIMQEEGQPLKLPETKKTLLFTFNVPGSGNASVKDMEALLPLMNMVIYSIDKVKKFRLNREGKQKADKNRARVEENFLKITHVQRQEAAQTRREEKKRAEKERIMNEEDPEKQRRLEEAAQRREQKKIEKKQMKMKQIKVKAM.

The signal sequence occupies residues 1 to 20; that stretch reads MILFTRLLAVSLLLVSGAFA. Residues 21 to 141 lie on the Cytoplasmic side of the membrane; the sequence is KFQEFDDSDD…PAHLQNSWES (121 aa). Acidic residues-rich tracts occupy residues 33 to 47 and 62 to 103; these read EYDDNDFAEFEDAAD and KEDE…EPYD. The tract at residues 33–103 is disordered; that stretch reads EYDDNDFAEF…EGDADAEPYD (71 aa). A helical membrane pass occupies residues 142–162; the sequence is YYMEILMVTGLLAYIMNYIIG. Residues 163–489 are Lumenal-facing; sequence KNKNSRLAQA…KMKQIKVKAM (327 aa). Positions 428–489 form a coiled coil; sequence HVQRQEAAQT…KMKQIKVKAM (62 aa). The segment at 430–489 is disordered; sequence QRQEAAQTRREEKKRAEKERIMNEEDPEKQRRLEEAAQRREQKKIEKKQMKMKQIKVKAM. The segment covering 436 to 478 has biased composition (basic and acidic residues); that stretch reads QTRREEKKRAEKERIMNEEDPEKQRRLEEAAQRREQKKIEKKQ. Residues 479–489 are compositionally biased toward basic residues; it reads MKMKQIKVKAM.

The protein belongs to the CCDC47 family. Component of the multi-pass translocon (MPT) complex.

Its subcellular location is the endoplasmic reticulum membrane. The protein resides in the rough endoplasmic reticulum membrane. Functionally, component of the multi-pass translocon (MPT) complex that mediates insertion of multi-pass membrane proteins into the lipid bilayer of membranes. The MPT complex takes over after the SEC61 complex: following membrane insertion of the first few transmembrane segments of proteins by the SEC61 complex, the MPT complex occludes the lateral gate of the SEC61 complex to promote insertion of subsequent transmembrane regions. The sequence is that of PAT complex subunit CCDC47 (ccdc47) from Xenopus laevis (African clawed frog).